The following is a 142-amino-acid chain: UPF0310 protein PYRAB08750 (142 aa).

This sequence belongs to the UPF0310 family.

The protein is UPF0310 protein PYRAB08750 of Pyrococcus abyssi (strain GE5 / Orsay).